Here is a 147-residue protein sequence, read N- to C-terminus: uncharacterized protein (147 aa).

A helical membrane pass occupies residues 69–89 (IFFFLSLYLSSIKIPMLILNI).

The protein localises to the membrane. This is an uncharacterized protein from Saccharomyces cerevisiae (strain ATCC 204508 / S288c) (Baker's yeast).